A 101-amino-acid polypeptide reads, in one-letter code: NADH-quinone oxidoreductase subunit K (101 aa).

The next 3 helical transmembrane spans lie at 4-24 (LAHYLVLGAILFAISIVGIFL), 30-50 (IIILMAIELMLLAVNTNFVAF), and 61-81 (IFVFFVLTVAAAEAAIGLAIL).

It belongs to the complex I subunit 4L family. As to quaternary structure, NDH-1 is composed of 14 different subunits. Subunits NuoA, H, J, K, L, M, N constitute the membrane sector of the complex.

Its subcellular location is the cell inner membrane. The enzyme catalyses a quinone + NADH + 5 H(+)(in) = a quinol + NAD(+) + 4 H(+)(out). In terms of biological role, NDH-1 shuttles electrons from NADH, via FMN and iron-sulfur (Fe-S) centers, to quinones in the respiratory chain. The immediate electron acceptor for the enzyme in this species is believed to be ubiquinone. Couples the redox reaction to proton translocation (for every two electrons transferred, four hydrogen ions are translocated across the cytoplasmic membrane), and thus conserves the redox energy in a proton gradient. The sequence is that of NADH-quinone oxidoreductase subunit K from Paraburkholderia xenovorans (strain LB400).